The sequence spans 277 residues: Putative protein-disulfide oxidoreductase RC0029 (277 aa).

A signal peptide spans 1–22 (MRSIFIILIFLLFLSSCSEEKA). The segment at 34-80 (EHETQNNETSKATNQEAVNSENTTESIVPANDNNQTDEVSTPASQKQ) is disordered. A compositionally biased stretch (polar residues) spans 39 to 80 (NNETSKATNQEAVNSENTTESIVPANDNNQTDEVSTPASQKQ). The region spanning 76–265 (ASQKQKNPAI…ISTAVDKALE (190 aa)) is the Thioredoxin domain. Cysteine 118 and cysteine 121 are oxidised to a cystine.

This sequence belongs to the thioredoxin family. DsbA subfamily.

The protein localises to the periplasm. In terms of biological role, may be required for disulfide bond formation in some proteins. The polypeptide is Putative protein-disulfide oxidoreductase RC0029 (Rickettsia conorii (strain ATCC VR-613 / Malish 7)).